We begin with the raw amino-acid sequence, 320 residues long: Phosphate acyltransferase (320 aa).

The protein belongs to the PlsX family. In terms of assembly, homodimer. Probably interacts with PlsY.

The protein resides in the cytoplasm. The catalysed reaction is a fatty acyl-[ACP] + phosphate = an acyl phosphate + holo-[ACP]. The protein operates within lipid metabolism; phospholipid metabolism. Its function is as follows. Catalyzes the reversible formation of acyl-phosphate (acyl-PO(4)) from acyl-[acyl-carrier-protein] (acyl-ACP). This enzyme utilizes acyl-ACP as fatty acyl donor, but not acyl-CoA. The protein is Phosphate acyltransferase of Syntrophomonas wolfei subsp. wolfei (strain DSM 2245B / Goettingen).